Consider the following 391-residue polypeptide: F-box/kelch-repeat protein At4g05080 (391 aa).

An F-box domain is found at 2–49 (TMMFDLTQDLVKEILSRVPITSLGAVRSTCKGWNALSKDRILCKAKPK). 2 Kelch repeats span residues 100 to 143 (HMYY…TFCL) and 144 to 194 (RYDN…SASV). Basic residues predominate over residues 369 to 385 (RRRRERNSKRKEKKRKG). Residues 369–391 (RRRRERNSKRKEKKRKGTTNNKV) form a disordered region.

The sequence is that of F-box/kelch-repeat protein At4g05080 from Arabidopsis thaliana (Mouse-ear cress).